Here is a 276-residue protein sequence, read N- to C-terminus: Diaminopimelate epimerase (276 aa).

Substrate-binding residues include asparagine 13, glutamine 46, and asparagine 66. Catalysis depends on cysteine 75, which acts as the Proton donor. Substrate contacts are provided by residues 76–77, asparagine 159, asparagine 192, and 210–211; these read GN and ER. The active-site Proton acceptor is the cysteine 219. Substrate is bound at residue 220-221; it reads GT.

This sequence belongs to the diaminopimelate epimerase family. Homodimer.

It localises to the cytoplasm. The catalysed reaction is (2S,6S)-2,6-diaminopimelate = meso-2,6-diaminopimelate. Its pathway is amino-acid biosynthesis; L-lysine biosynthesis via DAP pathway; DL-2,6-diaminopimelate from LL-2,6-diaminopimelate: step 1/1. In terms of biological role, catalyzes the stereoinversion of LL-2,6-diaminopimelate (L,L-DAP) to meso-diaminopimelate (meso-DAP), a precursor of L-lysine and an essential component of the bacterial peptidoglycan. This Pseudomonas syringae pv. syringae (strain B728a) protein is Diaminopimelate epimerase.